A 426-amino-acid chain; its full sequence is Enolase (426 aa).

Q165 is a binding site for (2R)-2-phosphoglycerate. The active-site Proton donor is E209. The Mg(2+) site is built by D244, E287, and D313. Residues K338, R367, S368, and K389 each coordinate (2R)-2-phosphoglycerate. K338 acts as the Proton acceptor in catalysis.

The protein belongs to the enolase family. It depends on Mg(2+) as a cofactor.

It is found in the cytoplasm. It localises to the secreted. The protein localises to the cell surface. The catalysed reaction is (2R)-2-phosphoglycerate = phosphoenolpyruvate + H2O. It participates in carbohydrate degradation; glycolysis; pyruvate from D-glyceraldehyde 3-phosphate: step 4/5. Its function is as follows. Catalyzes the reversible conversion of 2-phosphoglycerate (2-PG) into phosphoenolpyruvate (PEP). It is essential for the degradation of carbohydrates via glycolysis. This is Enolase from Methanococcus maripaludis (strain C7 / ATCC BAA-1331).